The primary structure comprises 78 residues: Probable Fe(2+)-trafficking protein (78 aa).

The protein belongs to the Fe(2+)-trafficking protein family. As to quaternary structure, monomer.

Could be a mediator in iron transactions between iron acquisition and iron-requiring processes, such as synthesis and/or repair of Fe-S clusters in biosynthetic enzymes. The polypeptide is Probable Fe(2+)-trafficking protein (Wigglesworthia glossinidia brevipalpis).